A 334-amino-acid chain; its full sequence is Biotin synthase (334 aa).

Residues Glu55–Arg280 enclose the Radical SAM core domain. Residues Cys70, Cys74, and Cys77 each contribute to the [4Fe-4S] cluster site. Cys113, Cys205, and Arg275 together coordinate [2Fe-2S] cluster.

Belongs to the radical SAM superfamily. Biotin synthase family. As to quaternary structure, homodimer. Requires [4Fe-4S] cluster as cofactor. The cofactor is [2Fe-2S] cluster.

It carries out the reaction (4R,5S)-dethiobiotin + (sulfur carrier)-SH + 2 reduced [2Fe-2S]-[ferredoxin] + 2 S-adenosyl-L-methionine = (sulfur carrier)-H + biotin + 2 5'-deoxyadenosine + 2 L-methionine + 2 oxidized [2Fe-2S]-[ferredoxin]. It functions in the pathway cofactor biosynthesis; biotin biosynthesis; biotin from 7,8-diaminononanoate: step 2/2. Catalyzes the conversion of dethiobiotin (DTB) to biotin by the insertion of a sulfur atom into dethiobiotin via a radical-based mechanism. The protein is Biotin synthase of Corynebacterium glutamicum (strain R).